A 314-amino-acid polypeptide reads, in one-letter code: MAFVTRQFVRSMSSSSSASAAAKKILIKHVTVIGGGLMGAGIAQVAAATGHTVVLVDQTEDILAKSKKGIEESLKRMAKKKFTENPKAADEFVEKTLSSLSTSTDAASVVHSTDLVVEAIVENLKLKNELFQRLDKFAAEHTIFASNTSSLQITNIANATTRQDRFAGLHFFNPVPMMKLVEVIKTPMTSQKTFESLVDFCKTLGKHPVSCKDTPGFIVNRLLVPYLIEAIRLHERGDASKEDIDTAMKLGAGYPMGPFELLDYVGLDTTKFILDGWHEMDPENPLFQPSPSMNNLVAQKKLGKKTGEGFYKYK.

A mitochondrion-targeting transit peptide spans 1–12 (MAFVTRQFVRSM). Residues 34–39 (GGGLMG) and D57 contribute to the NAD(+) site. S73 is a CoA binding site. K75 carries the post-translational modification N6-acetyllysine. K80 contacts CoA. An N6-succinyllysine modification is found at K80. K81 and K87 each carry N6-acetyllysine; alternate. 2 positions are modified to N6-succinyllysine; alternate: K81 and K87. E122 provides a ligand contact to NAD(+). The residue at position 125 (K125) is an N6-acetyllysine. NAD(+) is bound at residue K127. At K127 the chain carries N6-(2-hydroxyisobutyryl)lysine. The residue at position 136 (K136) is an N6-acetyllysine; alternate. At K136 the chain carries N6-succinyllysine; alternate. NAD(+)-binding residues include S149 and N173. S149 lines the CoA pocket. Residue K179 is modified to N6-acetyllysine. An N6-acetyllysine; alternate mark is found at K185, K192, and K202. An N6-succinyllysine; alternate mark is found at K185, K192, and K202. At K206 the chain carries N6-succinyllysine. An N6-acetyllysine; alternate mark is found at K212 and K241. K212 and K241 each carry N6-succinyllysine; alternate. K305 is an NAD(+) binding site. The residue at position 312 (K312) is an N6-acetyllysine; alternate. At K312 the chain carries N6-succinyllysine; alternate.

The protein belongs to the 3-hydroxyacyl-CoA dehydrogenase family. In terms of assembly, homodimer. Interacts with GLUD1; this interaction inhibits the activation of glutamate dehydrogenase 1 (GLUD1). In terms of processing, succinylation at Lys-81, adjacent to a coenzyme A binding site. Desuccinylated by SIRT5.

The protein localises to the mitochondrion matrix. It catalyses the reaction a (3S)-3-hydroxyacyl-CoA + NAD(+) = a 3-oxoacyl-CoA + NADH + H(+). It carries out the reaction (3S)-3-hydroxybutanoyl-CoA + NAD(+) = acetoacetyl-CoA + NADH + H(+). The catalysed reaction is (3S)-hydroxydecanoyl-CoA + NAD(+) = 3-oxodecanoyl-CoA + NADH + H(+). The enzyme catalyses (3S)-hydroxyhexadecanoyl-CoA + NAD(+) = 3-oxohexadecanoyl-CoA + NADH + H(+). The protein operates within lipid metabolism; fatty acid beta-oxidation. Functionally, mitochondrial fatty acid beta-oxidation enzyme that catalyzes the third step of the beta-oxidation cycle for medium and short-chain 3-hydroxy fatty acyl-CoAs (C4 to C10). Plays a role in the control of insulin secretion by inhibiting the activation of glutamate dehydrogenase 1 (GLUD1), an enzyme that has an important role in regulating amino acid-induced insulin secretion. Plays a role in the maintenance of normal spermatogenesis through the reduction of fatty acid accumulation in the testes. In Rattus norvegicus (Rat), this protein is Hydroxyacyl-coenzyme A dehydrogenase, mitochondrial (Hadh).